Consider the following 425-residue polypeptide: Glutamyl-tRNA reductase (425 aa).

Substrate contacts are provided by residues 51–54, Ser-111, 116–118, and Gln-122; these read TCNR and DMQ. Cys-52 serves as the catalytic Nucleophile. 191 to 196 provides a ligand contact to NADP(+); the sequence is GLGEIG.

The protein belongs to the glutamyl-tRNA reductase family. In terms of assembly, homodimer.

It carries out the reaction (S)-4-amino-5-oxopentanoate + tRNA(Glu) + NADP(+) = L-glutamyl-tRNA(Glu) + NADPH + H(+). Its pathway is porphyrin-containing compound metabolism; protoporphyrin-IX biosynthesis; 5-aminolevulinate from L-glutamyl-tRNA(Glu): step 1/2. Its function is as follows. Catalyzes the NADPH-dependent reduction of glutamyl-tRNA(Glu) to glutamate 1-semialdehyde (GSA). This is Glutamyl-tRNA reductase from Cytophaga hutchinsonii (strain ATCC 33406 / DSM 1761 / CIP 103989 / NBRC 15051 / NCIMB 9469 / D465).